The sequence spans 554 residues: Potassium-transporting ATPase potassium-binding subunit (554 aa).

A run of 12 helical transmembrane segments spans residues 1–21, 59–79, 131–151, 174–194, 246–266, 279–299, 323–343, 352–372, 375–395, 412–432, 481–501, and 525–545; these read MSSQVAGLLQLTALIAALALA, WPAYLRGVLAFSAMSVLFLYL, GLAVQNFLSAAVGMAVAVALV, VRILVPISVIGAIVLVAAGAI, PNPLSNLFEVFLILLIPFALT, GYAILGAMAVIWIGFTALMMW, FGIAGSSIFAVATTLTSTGAV, GFGGGITLLGMQLGEIAPGGV, GLYGMLIMAIIAVFIAGLMVG, FAACYILITPALVLGFTAVAM, IGIAMLLGRFLPMVFVLALAG, and GLLVGTILIITGLTYFPALAL.

It belongs to the KdpA family. The system is composed of three essential subunits: KdpA, KdpB and KdpC.

The protein localises to the cell membrane. Part of the high-affinity ATP-driven potassium transport (or Kdp) system, which catalyzes the hydrolysis of ATP coupled with the electrogenic transport of potassium into the cytoplasm. This subunit binds the extracellular potassium ions and delivers the ions to the membrane domain of KdpB through an intramembrane tunnel. The polypeptide is Potassium-transporting ATPase potassium-binding subunit (Streptomyces griseus subsp. griseus (strain JCM 4626 / CBS 651.72 / NBRC 13350 / KCC S-0626 / ISP 5235)).